Reading from the N-terminus, the 177-residue chain is Large ribosomal subunit protein uL16 (177 aa).

It belongs to the universal ribosomal protein uL16 family. In terms of assembly, part of the 50S ribosomal subunit. Weakly binds 5S rRNA. Probably binds the A and P site tRNAs.

Functionally, this is 1 of 5 proteins that mediate the attachment of the 5S rRNA onto the large ribosomal subunit, stabilizing the orientation of adjacent RNA domains. Modeling places the A and P site tRNAs in close proximity to this protein. In Haloarcula marismortui (strain ATCC 43049 / DSM 3752 / JCM 8966 / VKM B-1809) (Halobacterium marismortui), this protein is Large ribosomal subunit protein uL16.